The following is a 178-amino-acid chain: Sec-independent protein translocase protein TatB (178 aa).

The helical transmembrane segment at 1–21 (MFDIGWSELVVIAVVALIAIG) threads the bilayer. A compositionally biased stretch (polar residues) spans 77 to 86 (TSGNLMTKLT). Residues 77–178 (TSGNLMTKLT…HEAVKDAKAS (102 aa)) are disordered. Over residues 93-102 (PKLEDLDKPA) the composition is skewed to basic and acidic residues. The segment covering 155–165 (HATPEPAPATH) has biased composition (low complexity). Basic and acidic residues predominate over residues 166–178 (ETPHEAVKDAKAS).

The protein belongs to the TatB family. In terms of assembly, the Tat system comprises two distinct complexes: a TatABC complex, containing multiple copies of TatA, TatB and TatC subunits, and a separate TatA complex, containing only TatA subunits. Substrates initially bind to the TatABC complex, which probably triggers association of the separate TatA complex to form the active translocon.

It is found in the cell inner membrane. Its function is as follows. Part of the twin-arginine translocation (Tat) system that transports large folded proteins containing a characteristic twin-arginine motif in their signal peptide across membranes. Together with TatC, TatB is part of a receptor directly interacting with Tat signal peptides. TatB may form an oligomeric binding site that transiently accommodates folded Tat precursor proteins before their translocation. The polypeptide is Sec-independent protein translocase protein TatB (Nitrobacter hamburgensis (strain DSM 10229 / NCIMB 13809 / X14)).